Consider the following 212-residue polypeptide: uncharacterized protein (212 aa).

A signal peptide spans 1–20; it reads MRRVLLCFLTLILLLPAASA.

This is an uncharacterized protein from Archaeoglobus fulgidus (strain ATCC 49558 / DSM 4304 / JCM 9628 / NBRC 100126 / VC-16).